The primary structure comprises 248 residues: 5'-nucleotidase SurE (248 aa).

Asp-8, Asp-9, Ser-39, and Asn-91 together coordinate a divalent metal cation.

Belongs to the SurE nucleotidase family. The cofactor is a divalent metal cation.

The protein localises to the cytoplasm. It carries out the reaction a ribonucleoside 5'-phosphate + H2O = a ribonucleoside + phosphate. Nucleotidase that shows phosphatase activity on nucleoside 5'-monophosphates. This is 5'-nucleotidase SurE from Geotalea uraniireducens (strain Rf4) (Geobacter uraniireducens).